The chain runs to 211 residues: Large ribosomal subunit protein uL4 (211 aa).

The segment at 40 to 85 (QQAHSRQGTASTLTRSEVRGGGRKPYKQKGTGRARQGSIRTPLRPG) is disordered. Polar residues predominate over residues 41–54 (QAHSRQGTASTLTR). A compositionally biased stretch (basic residues) spans 60-71 (GGRKPYKQKGTG).

This sequence belongs to the universal ribosomal protein uL4 family. As to quaternary structure, part of the 50S ribosomal subunit.

In terms of biological role, one of the primary rRNA binding proteins, this protein initially binds near the 5'-end of the 23S rRNA. It is important during the early stages of 50S assembly. It makes multiple contacts with different domains of the 23S rRNA in the assembled 50S subunit and ribosome. Forms part of the polypeptide exit tunnel. The chain is Large ribosomal subunit protein uL4 from Prochlorococcus marinus (strain NATL2A).